The chain runs to 283 residues: Cuticle collagen 49 (283 aa).

A signal peptide spans 1–19 (MWKFVIGSVSTAAFFVSVC). Positions 90–283 (EPTKNCPAGP…GYCTCPPRTA (194 aa)) are disordered. A compositionally biased stretch (basic and acidic residues) spans 127–139 (VVIHDMPNPKECI). Over residues 143–155 (AGPPGPPGPPGPL) the composition is skewed to pro residues. Residues 185–204 (QGPPGSAGRAGPRGQAGQPG) show a composition bias toward low complexity. Positions 213–271 (GRPGPQGPLGEPGAQGEPGVDGKDGALGAPGRKAENGRPGKRGKDGVAGVPGTRGKEGE) constitute a Collagen-like domain. Residues 244-257 (RKAENGRPGKRGKD) are compositionally biased toward basic and acidic residues.

Belongs to the cuticular collagen family. In terms of assembly, collagen polypeptide chains are complexed within the cuticle by disulfide bonds and other types of covalent cross-links.

In terms of biological role, probable cuticular collagen-like protein. Nematode cuticles are composed largely of collagen-like proteins. The cuticle functions both as an exoskeleton and as a barrier to protect the worm from its environment. Acts downstream of the Wnt signaling pathway, perhaps in the formation of the adult cuticle. This is Cuticle collagen 49 from Caenorhabditis elegans.